The primary structure comprises 95 residues: MAHKKGASSSRNGRDSNAQRLGVKRFGGQLVKAGEIIVRQRGTHFHPGDLVGRGKDDTLFALAPGHVEFGRKRGRRVVNIVSADTERAEKAAVPA.

The disordered stretch occupies residues 1 to 21 (MAHKKGASSSRNGRDSNAQRL). Over residues 7–19 (ASSSRNGRDSNAQ) the composition is skewed to polar residues.

It belongs to the bacterial ribosomal protein bL27 family.

This chain is Large ribosomal subunit protein bL27, found in Parafrankia sp. (strain EAN1pec).